A 649-amino-acid polypeptide reads, in one-letter code: Golgin subfamily A member 6-like protein 26 (649 aa).

Disordered stretches follow at residues 1–94 (MWPQ…HQEA), 300–330 (QEEK…RQEE), 358–440 (EKMH…EMWR), 455–572 (KEKM…REQE), and 584–620 (EQEE…MRRQ). The segment covering 10 to 23 (HPHLPTHPHLPTHP) has biased composition (low complexity). The segment covering 25-46 (MSKETRQSKLAEAKEQLTDHHP) has biased composition (basic and acidic residues). 2 stretches are compositionally biased toward polar residues: residues 47–57 (QTNPSVGTAAS) and 65–77 (NNGT…TSGG). Over residues 80 to 94 (SPEDEQKASHQHQEA) the composition is skewed to basic and acidic residues. The stretch at 151–644 (LEQALSAVAT…EEKMQEHQEH (494 aa)) forms a coiled coil.

It belongs to the GOLGA6 family.

In Homo sapiens (Human), this protein is Golgin subfamily A member 6-like protein 26 (GOLGA6L26).